The sequence spans 96 residues: Large ribosomal subunit protein eL21 (96 aa).

A disordered region spans residues 1 to 37 (MPSSNGPMTGTRDKLSNSPRERGMSPPQRAIQEYDEG). Residues 11–23 (TRDKLSNSPRERG) are compositionally biased toward basic and acidic residues.

It belongs to the eukaryotic ribosomal protein eL21 family.

The protein is Large ribosomal subunit protein eL21 of Haloquadratum walsbyi (strain DSM 16790 / HBSQ001).